A 416-amino-acid polypeptide reads, in one-letter code: MTVDLREEKELAQQRFKEICKHAKIVDTHNDFPYLLRVQLRNKLQLAEFDFENGLTSHTDLVKMRQGQVGVQFFSCFIECKNPNYLYQDFDTPTTVVRDTLEQIDVTRRLVCKYNNDLKFVDCADDAIAAFRNNGKIAIALGVEGLHQVDTSLAVLRQYYSLGVRYITLTHNCDNPFATAASSITGGLPDRGLSAYGIECIFEMNRLGMMVDLSHVSHRTMHDALDVTKAPVIFSHSSAYTLTEHERNVRDDVLERLKTNGGVVQVNFYQDFIRKPGSDRATIDDAADHILHIIKVAGWEHVGLGSDFDGIPQGPKGLEDVSKYPDLICKIIERTNATNEQIEGLMGLNVLRVWKKTELVALQLSKKLEPIESSWSGRKWEFYSYAKEFPELFPDAYKLNEKSTVWNYDQPLNIEK.

Positions 29, 31, 144, 215, and 236 each coordinate Zn(2+).

Belongs to the metallo-dependent hydrolases superfamily. Peptidase M19 family. Zn(2+) is required as a cofactor.

It catalyses the reaction an L-aminoacyl-L-amino acid + H2O = 2 an L-alpha-amino acid. This is an uncharacterized protein from Schizosaccharomyces pombe (strain 972 / ATCC 24843) (Fission yeast).